The following is a 189-amino-acid chain: Peptidyl-tRNA hydrolase (189 aa).

Y14 is a tRNA binding site. The active-site Proton acceptor is H19. TRNA is bound by residues F64, N66, and N112.

The protein belongs to the PTH family. In terms of assembly, monomer.

The protein localises to the cytoplasm. The enzyme catalyses an N-acyl-L-alpha-aminoacyl-tRNA + H2O = an N-acyl-L-amino acid + a tRNA + H(+). In terms of biological role, hydrolyzes ribosome-free peptidyl-tRNAs (with 1 or more amino acids incorporated), which drop off the ribosome during protein synthesis, or as a result of ribosome stalling. Functionally, catalyzes the release of premature peptidyl moieties from peptidyl-tRNA molecules trapped in stalled 50S ribosomal subunits, and thus maintains levels of free tRNAs and 50S ribosomes. This is Peptidyl-tRNA hydrolase from Erythrobacter litoralis (strain HTCC2594).